We begin with the raw amino-acid sequence, 204 residues long: Facilitator of iron transport 3 (204 aa).

The N-terminal stretch at 1–18 (MKFSSALVLSAVAATALA) is a signal peptide. Disordered stretches follow at residues 84-104 (SAAETSSAAETSSADEGSGSS) and 133-175 (EGSS…SSTA). The span at 135 to 175 (SSNTWSPSSTSTSSEAATSSASTTATTTAETSSSATSSSTA) shows a compositional bias: low complexity. Glycine 182 carries GPI-anchor amidated glycine lipidation. A propeptide spans 183-204 (AADAITAGTGLMGAALAAVMLL) (removed in mature form).

Post-translationally, the GPI-anchor is attached to the protein in the endoplasmic reticulum and serves to target the protein to the cell surface. There, the glucosamine-inositol phospholipid moiety is cleaved off and the GPI-modified mannoprotein is covalently attached via its lipidless GPI glycan remnant to the 1,6-beta-glucan of the outer cell wall layer.

It localises to the secreted. Its subcellular location is the cell wall. It is found in the membrane. Functionally, involved in the uptake of non-siderophore and siderophore sources of iron. Has a role in the retention of iron in the cell wall and periplasmic space. This chain is Facilitator of iron transport 3 (FIT3), found in Saccharomyces cerevisiae (strain ATCC 204508 / S288c) (Baker's yeast).